The following is an 802-amino-acid chain: MSFNHQEIEKKWQGYWEENKTFRTPDETEKPKFYALDMFPYPSGAGLHVGHPEGYTATDILSRMKRMQGYNVLHPMGWDAFGLPAEQYALDTGNSPAEFTEHNINTFRNQIKSLGFSYDWDREVNTTDPNYYKWTQWIFLKLFEKGLAYVDEVPVNWCPALGTVLANEEIIDGKSERGGHPVERRPMRQWMLKITAYGDRLLEDLDELDWPESLKDMQRNWIGRSEGAEVHFNIDGTDEKFTVFTTRPDTLFGATYCVLAPEHALVAEITTAEQKEAVEAYINAVKMKSDLERTELAKEKTGVFTGAYAVNPVNGEKLPIWIADYVLATYGTGAVMAVPAHDERDYEFASVFNLPMKEVVKGGDITKEVYTGDGAHVNSAFLDGLNKEEAIAKMIEWLEATSAGNQKVTYRLRDWLFSRQRYWGEPIPVIHWEDGTMTAVKEEELPLVLPKTENIRPSGTGESPLANIDEWVNVVDPETGKKGRRETNTMPQWAGSCWYYLRYIDPNNSEALVDPEKVKQWLPVDIYIGGAEHAVLHLLYARFWHKVLYDIGVVPTKEPFQQLFNQGMILGENNEKMSKSKGNVVNPDDIVASHGADTLRLYEMFMGPLDASIAWSENGLDGARRFLDRVWRLFVQDNGELSEKITDAPNKELEKAYHQTVKKVTEDYAELRFNTAISQMMVFINDAYKAETLPREYVEGFVKMIAPVAPHIGEELWSKLGYNETITYASWPTFDESKLVEDEVEIVVQVMGKVRAKLTMSKDASKEEMEQLALEAIQDQIEGKTVRKVIVVPGKLVNVVAN.

Residues 40 to 51 (PYPSGAGLHVGH) carry the 'HIGH' region motif. A 'KMSKS' region motif is present at residues 576 to 580 (KMSKS). An ATP-binding site is contributed by Lys-579.

This sequence belongs to the class-I aminoacyl-tRNA synthetase family.

It localises to the cytoplasm. It catalyses the reaction tRNA(Leu) + L-leucine + ATP = L-leucyl-tRNA(Leu) + AMP + diphosphate. The protein is Leucine--tRNA ligase of Bacillus cereus (strain ATCC 14579 / DSM 31 / CCUG 7414 / JCM 2152 / NBRC 15305 / NCIMB 9373 / NCTC 2599 / NRRL B-3711).